The sequence spans 307 residues: uncharacterized protein (307 aa).

The HTH lysR-type domain occupies 11–68; it reads IRLRHLHTFVAVAQQGTLGRAAETLNLSQPALSKTLNELEQLTGARLFERGRQGAQLT. The H-T-H motif DNA-binding region spans 28-47; sequence LGRAAETLNLSQPALSKTLN.

The protein belongs to the LysR transcriptional regulatory family.

This is an uncharacterized protein from Escherichia coli (strain K12).